The chain runs to 786 residues: Toll-like receptor 1 (786 aa).

A signal peptide spans 1–24 (MTSIFHFAIIFMLILQIRIQLSEE). Residues 25 to 580 (SEFLVDRSKN…HMSELSCNIT (556 aa)) are Extracellular-facing. The N-linked (GlcNAc...) asparagine glycan is linked to Asn-51. LRR repeat units lie at residues 54-77 (QNYISELWTSDILSLSKLRILIIS), 78-101 (HNRIQYLDISVFKFNQELEYLDLS), 102-125 (HNKLVKISCHPTVNLKHLDLSFNA), 126-150 (FDALPICKEFGNMSQLKFLGLSTTH), 151-175 (LEKSSVLPIAHLNISKVLLVLGETY), 176-199 (GEKEDPEGLQDFNTESLHIVFPTN), 200-223 (KEFHFILDVSVKTVANLELSNIKC), 224-250 (VLEDNKCSYFLSILAKLQTNPKLSNLT), 251-278 (LNNIETTWNSFIRILQLVWHTTVWYFSI), 279-308 (SNVKLQGQLDFRDFDYSGTSLKALSIHQVV), 309-337 (SDVFGFPQSYIYEIFSNMNIKNFTVSGTR), 338-361 (MVHMLCPSKISPFLHLDFSNNLLT), 362-388 (DTVFENCGHLTELETLILQMNQLKELS), 389-414 (KIAEMTTQMKSLQQLDISQNSVSYDE), 415-437 (KKGDCSWTKSLLSLNMSSNILTD), 438-457 (TIFRCLPPRIKVLDLHSNKI), 458-478 (KSIPKQVVKLEALQELNVAFN), 479-500 (SLTDLPGCGSFSSLSVLIIDHN), and 501-524 (SVSHPSADFFQSCQKMRSIKAGDN). Residues Cys-110 and Cys-132 are joined by a disulfide bond. N-linked (GlcNAc...) asparagine glycosylation is found at Asn-137 and Asn-163. Cys-223 and Cys-230 are oxidised to a cystine. Residues 313–316 (GFPQ) form an interaction with bacterial lipopeptide region. Asn-330 is a glycosylation site (N-linked (GlcNAc...) asparagine). A disulfide bridge connects residues Cys-343 and Cys-368. Cys-419 and Cys-442 are disulfide-bonded. Asn-429 carries N-linked (GlcNAc...) asparagine glycosylation. In terms of domain architecture, LRRCT spans 525–579 (PFQCTCELGEFVKNIDQVSSEVLEGWPDSYKCDYPESYRGTLLKDFHMSELSCNI). N-linked (GlcNAc...) asparagine glycosylation occurs at Asn-578. Residues 581 to 601 (LLIVTIVATMLVLAVTVTSLC) form a helical membrane-spanning segment. The Cytoplasmic segment spans residues 602-786 (SYLDLPWYLR…NIKLTEQAKK (185 aa)). The 142-residue stretch at 635–776 (LQFHAFISYS…LFWANLRAAI (142 aa)) folds into the TIR domain.

It belongs to the Toll-like receptor family. In terms of assembly, interacts (via extracellular domain) with TLR2. TLR2 seems to exist in heterodimers with either TLR1 or TLR6 before stimulation by the ligand. The heterodimers form bigger oligomers in response to their corresponding ligands as well as further heterotypic associations with other receptors such as CD14 and/or CD36. The activation cluster TLR2:TLR1:CD14 forms in response to triacylated lipopeptides. Binds MYD88 (via TIR domain). Interacts with CNPY3. Interacts with neutrophil recruitment protein from Aedes aegypti saliva; the interaction probably promotes activation of canonical NF-kappa-B signaling in skin-resident macrophages and subsequent expression of neutrophil chemoattractants. As to expression, ubiquitous. Highly expressed in spleen, ovary, peripheral blood leukocytes, thymus and small intestine.

Its subcellular location is the cell membrane. It is found in the cytoplasmic vesicle. The protein resides in the phagosome membrane. It localises to the membrane raft. The protein localises to the golgi apparatus. Functionally, participates in the innate immune response to microbial agents. Specifically recognizes diacylated and triacylated lipopeptides. Cooperates with TLR2 to mediate the innate immune response to bacterial lipoproteins or lipopeptides. Forms the activation cluster TLR2:TLR1:CD14 in response to triacylated lipopeptides, this cluster triggers signaling from the cell surface and subsequently is targeted to the Golgi in a lipid-raft dependent pathway. Acts via MYD88 and TRAF6, leading to NF-kappa-B activation, cytokine secretion and the inflammatory response. The sequence is that of Toll-like receptor 1 (TLR1) from Homo sapiens (Human).